A 143-amino-acid chain; its full sequence is MAKKIIGFIKLQIPAGKANPSPPVGPALGQRGLNIMEFCKAFNAQTQGMEPGLPVPVVITAFADKSFTFVMKSPPATVLIKKAAGVTKGSPKPHTDKVGKITRAQAEEIAKAKNADLTAADLDAAVRTIAGSARSMGITVEGL.

It belongs to the universal ribosomal protein uL11 family. Part of the ribosomal stalk of the 50S ribosomal subunit. Interacts with L10 and the large rRNA to form the base of the stalk. L10 forms an elongated spine to which L12 dimers bind in a sequential fashion forming a multimeric L10(L12)X complex. One or more lysine residues are methylated.

In terms of biological role, forms part of the ribosomal stalk which helps the ribosome interact with GTP-bound translation factors. The polypeptide is Large ribosomal subunit protein uL11 (Cupriavidus pinatubonensis (strain JMP 134 / LMG 1197) (Cupriavidus necator (strain JMP 134))).